Consider the following 906-residue polypeptide: MLSLVQKIIGSRNERFIKKVSRIVQKINSLEPEFEKLSDEQLKAKTFEYRERLANGEILDNLLPEAFATVREAGKRTKNMRHYDVQLIGGIVLHQGKVAEMRTGEGKTLVATLPAYLNALTGDGVHVITVNDYLAKRDAELMSDIYEFLGMSVGVIVADLNPQQRKEAYACDITYGTNNEFGFDYLRDNMAYEKEQQVQRSRNYVIIDEVDSILIDEARTPLIISGASDDRSEMYNLFNRLVPYLEKQEKEEVENEQEQRDFYVDEKSKNAYLTEKGYAKIENMLKKEGILEEDDNLYSPHNITKMHYLNACLRAHSLYQLNIDYIVRDQEIVIIDESTGRAMPGRRWSDGLHQAIEAKEGVKINAENQTMASITFQNFFKLYNKIAGMTGTADTEAFELHSIYGLEVIIIPTNKPMIRKDHHDEIYGSVREKFDAIVEDIKERISKGQPVLVGTASIEASEVLSTLLKKKKIRHNVLNAKQHEKEASIIAMAGYPDNVTIATNMAGRGTDIILGGNLEVEIAQLEDPTPEDIAQIKAEWLKRNEAVKKAGGLCIIGSERHDSRRIDNQLRGRAARQGDPGESKFYLSMDDNLLRIFASQRMAERVKKGLKGGESLAFGFMSKVISKAQGKVESYHFDIRKNLLEYDNVVNTQRKVIYEQRQSFLEAEDVSDILADIRIDVAEQLFHDYVPAGSMHELWDLEGLEKALKSDFMIELDLQKLYEEDDSLGEEDLKRLVREAIEIEFVEKTKNLDSGAVRQFEKFSLLQSLDTHWREHLSSIDHLRNSINLRGYAQKDPKNEYKKEAFELFSTMLDNFKYEVISSLAKIRIATEEETQRAQQEWQESMSDIKAEHESVIDNNQRHDEDEQEEAPKVKQVRREGPKVKRNDPCPCGSGKKYKQCHSKVE.

Residues Gln-86, 104 to 108 (GEGKT), and Asp-511 contribute to the ATP site. Positions 852–888 (EHESVIDNNQRHDEDEQEEAPKVKQVRREGPKVKRND) are enriched in basic and acidic residues. Residues 852-906 (EHESVIDNNQRHDEDEQEEAPKVKQVRREGPKVKRNDPCPCGSGKKYKQCHSKVE) form a disordered region. Residues Cys-890, Cys-892, Cys-901, and His-902 each contribute to the Zn(2+) site. Over residues 896 to 906 (KKYKQCHSKVE) the composition is skewed to basic residues.

The protein belongs to the SecA family. In terms of assembly, monomer and homodimer. Part of the essential Sec protein translocation apparatus which comprises SecA, SecYEG and auxiliary proteins SecDF-YajC and YidC. Requires Zn(2+) as cofactor.

The protein resides in the cell inner membrane. The protein localises to the cytoplasm. The catalysed reaction is ATP + H2O + cellular proteinSide 1 = ADP + phosphate + cellular proteinSide 2.. Functionally, part of the Sec protein translocase complex. Interacts with the SecYEG preprotein conducting channel. Has a central role in coupling the hydrolysis of ATP to the transfer of proteins into and across the cell membrane, serving both as a receptor for the preprotein-SecB complex and as an ATP-driven molecular motor driving the stepwise translocation of polypeptide chains across the membrane. This Francisella tularensis subsp. tularensis (strain SCHU S4 / Schu 4) protein is Protein translocase subunit SecA.